The following is a 414-amino-acid chain: Enolase (414 aa).

Q162 is a binding site for (2R)-2-phosphoglycerate. Residue E204 is the Proton donor of the active site. Residues D239, E280, and D307 each contribute to the Mg(2+) site. (2R)-2-phosphoglycerate-binding residues include K332, R361, S362, and K383. K332 serves as the catalytic Proton acceptor.

The protein belongs to the enolase family. The cofactor is Mg(2+).

Its subcellular location is the cytoplasm. The protein resides in the secreted. It localises to the cell surface. The catalysed reaction is (2R)-2-phosphoglycerate = phosphoenolpyruvate + H2O. The protein operates within carbohydrate degradation; glycolysis; pyruvate from D-glyceraldehyde 3-phosphate: step 4/5. In terms of biological role, catalyzes the reversible conversion of 2-phosphoglycerate (2-PG) into phosphoenolpyruvate (PEP). It is essential for the degradation of carbohydrates via glycolysis. The protein is Enolase of Campylobacter jejuni subsp. jejuni serotype O:6 (strain 81116 / NCTC 11828).